Reading from the N-terminus, the 247-residue chain is Geranylgeranylglyceryl phosphate synthase (247 aa).

Residues Asp23 and Ser52 each contribute to the Mg(2+) site. Residues 171–177, 203–204, and 225–226 contribute to the sn-glycerol 1-phosphate site; these read YLEAGSG, GG, and GT.

This sequence belongs to the GGGP/HepGP synthase family. Group II subfamily. It depends on Mg(2+) as a cofactor.

It is found in the cytoplasm. The enzyme catalyses sn-glycerol 1-phosphate + (2E,6E,10E)-geranylgeranyl diphosphate = sn-3-O-(geranylgeranyl)glycerol 1-phosphate + diphosphate. Its pathway is membrane lipid metabolism; glycerophospholipid metabolism. In terms of biological role, prenyltransferase that catalyzes the transfer of the geranylgeranyl moiety of geranylgeranyl diphosphate (GGPP) to the C3 hydroxyl of sn-glycerol-1-phosphate (G1P). This reaction is the first ether-bond-formation step in the biosynthesis of archaeal membrane lipids. This is Geranylgeranylglyceryl phosphate synthase from Methanosarcina mazei (strain ATCC BAA-159 / DSM 3647 / Goe1 / Go1 / JCM 11833 / OCM 88) (Methanosarcina frisia).